Here is a 384-residue protein sequence, read N- to C-terminus: MAEQTYSWAYSLVDSSQVSTFLISILLIVYGSFRSLNMDFENQDKEKDSNSSSGSFNGNSTNNSIQTIDSTQALFLPIGASVSLLVMFFFFDSVQVVFTICTAVLATIAFAFLLLPMCQYLTRPCSPQNKISFGCCGRFTAAELLSFSLSVMLVLIWVLTGHWLLMDALAMGLCVAMIAFVRLPSLKVSCLLLSGLLIYDVFWVFFSAYIFNSNVMVKVATQPADNPLDVLSRKLHLGPNVGRDVPRLSLPGKLVFPSSTGSHFSMLGIGDIVMPGLLLCFVLRYDNYKKQASGDSCGAPGPANISGRMQKVSYFHCTLIGYFVGLLTATVASRIHRAAQPALLYLVPFTLLPLLTMAYLKGDLRRMWSEPFHSKSSSSRFLEV.

Topologically, residues 1–8 are lumenal; the sequence is MAEQTYSW. The helical transmembrane segment at 9-29 threads the bilayer; sequence AYSLVDSSQVSTFLISILLIV. The Cytoplasmic portion of the chain corresponds to 30-73; it reads YGSFRSLNMDFENQDKEKDSNSSSGSFNGNSTNNSIQTIDSTQA. A helical membrane pass occupies residues 74-94; it reads LFLPIGASVSLLVMFFFFDSV. Position 95 (Gln-95) is a topological domain, lumenal. Residues 96-116 traverse the membrane as a helical segment; it reads VVFTICTAVLATIAFAFLLLP. Over 117–138 the chain is Cytoplasmic; the sequence is MCQYLTRPCSPQNKISFGCCGR. A helical transmembrane segment spans residues 139 to 159; sequence FTAAELLSFSLSVMLVLIWVL. Topologically, residues 160–164 are lumenal; that stretch reads TGHWL. A helical membrane pass occupies residues 165–185; sequence LMDALAMGLCVAMIAFVRLPS. Residues 186–190 lie on the Cytoplasmic side of the membrane; it reads LKVSC. A helical membrane pass occupies residues 191-211; sequence LLLSGLLIYDVFWVFFSAYIF. Asp-200 is a catalytic residue. Topologically, residues 212-262 are lumenal; the sequence is NSNVMVKVATQPADNPLDVLSRKLHLGPNVGRDVPRLSLPGKLVFPSSTGS. Residues 263 to 283 traverse the membrane as a helical segment; sequence HFSMLGIGDIVMPGLLLCFVL. Asp-271 is an active-site residue. Residues 284-311 are Cytoplasmic-facing; the sequence is RYDNYKKQASGDSCGAPGPANISGRMQK. The helical transmembrane segment at 312–332 threads the bilayer; that stretch reads VSYFHCTLIGYFVGLLTATVA. Topologically, residues 333–339 are lumenal; it reads SRIHRAA. A helical transmembrane segment spans residues 340–360; that stretch reads QPALLYLVPFTLLPLLTMAYL. A PAL motif is present at residues 341-343; that stretch reads PAL. Residues 361-384 lie on the Cytoplasmic side of the membrane; sequence KGDLRRMWSEPFHSKSSSSRFLEV.

It belongs to the peptidase A22B family. As to quaternary structure, monomer. Homodimer. Interacts with STIM1 (via transmembrane region and SOAR/CAD domain); the interaction promotes the binding of STIM1 to ORAI1. Post-translationally, not glycosylated.

The protein resides in the endoplasmic reticulum membrane. Its subcellular location is the golgi apparatus. It is found in the membrane. With respect to regulation, its proteolytic activity is blocked by a signal peptide peptidase (SPP) inhibitor, (ZLL)2-ketone (ZLL) or a gamma-secretase inhibitor, LY411,575. Functionally, intramembrane-cleaving aspartic protease (I-CLiP) that cleaves type II membrane protein substrates in or close to their luminal transmembrane domain boundaries. Acts like a sheddase by mediating the proteolytic release and secretion of active site-containing ectodomains of glycan-modifiying glycosidase and glycosyltransferase enzymes such as MGAT5, B4GAT1 and B4GALT1. Plays a role in the regulation of cellular glycosylation processes. Required to link T-cell antigen receptor (TCR) and calcineurin-NFAT signaling cascades in lymphocytes by promoting the association of STIM1 and ORAI1 during store-operated calcium entry (SOCE) in a protease-independent manner. The chain is Signal peptide peptidase-like 3 from Mus musculus (Mouse).